A 468-amino-acid chain; its full sequence is MAVLTSRSTDFPRWYQDVLAKAELADNGPVRGTMVIRPYGYAIWERMQAEVDSRIKAAGAVNAYFPLFIPESYLRREAEHVEGFSPELAVVTIGGGKELEEPVVVRPTSETVIGEYLAKWTQSYRDLPLLLNQWANVVRWELRPRLFLRSSEFLWQEGHTAHADEADAAAYARRIALEVYRDFMTQVLAVPVFVGVKTRRERFAGATNTMTCEGMMGDGKALQMATSHELGQNFARAFDIDFLGADGARHLAWTTSWGCSTRMVGGLIMAHGDDNGLRVPPRLAPTQVVVLPVRDEETVVAKARQIAAALTDAGLRVQVDARPGLSFGRRVTDAEIKGIPVRVEVGPRDLAAGNVTLVRRDTSEKVPVPLAEVATRVPVLLGEVQADLYAEALALRESRTTDVATVAEAARAAQAGFARIPWRLVGEEGEAELAEEALTVRCIQTPDGGIPEAGSDADDLVCLIARSY.

The protein belongs to the class-II aminoacyl-tRNA synthetase family. ProS type 3 subfamily. As to quaternary structure, homodimer.

It is found in the cytoplasm. It carries out the reaction tRNA(Pro) + L-proline + ATP = L-prolyl-tRNA(Pro) + AMP + diphosphate. Its function is as follows. Catalyzes the attachment of proline to tRNA(Pro) in a two-step reaction: proline is first activated by ATP to form Pro-AMP and then transferred to the acceptor end of tRNA(Pro). The chain is Proline--tRNA ligase from Frankia casuarinae (strain DSM 45818 / CECT 9043 / HFP020203 / CcI3).